Reading from the N-terminus, the 396-residue chain is Acetate kinase (396 aa).

Asn8 serves as a coordination point for Mg(2+). Position 15 (Lys15) interacts with ATP. Arg89 is a substrate binding site. The active-site Proton donor/acceptor is the Asp146. Residues 206-210 (HIGNG), 283-285 (DMR), and 331-335 (GVGEN) each bind ATP. Glu383 provides a ligand contact to Mg(2+).

The protein belongs to the acetokinase family. Homodimer. Requires Mg(2+) as cofactor. Mn(2+) is required as a cofactor.

The protein localises to the cytoplasm. The enzyme catalyses acetate + ATP = acetyl phosphate + ADP. It functions in the pathway metabolic intermediate biosynthesis; acetyl-CoA biosynthesis; acetyl-CoA from acetate: step 1/2. Functionally, catalyzes the formation of acetyl phosphate from acetate and ATP. Can also catalyze the reverse reaction. The polypeptide is Acetate kinase (Streptococcus pneumoniae serotype 2 (strain D39 / NCTC 7466)).